The following is a 106-amino-acid chain: Iron-sulfur cluster assembly protein CyaY (106 aa).

It belongs to the frataxin family.

In terms of biological role, involved in iron-sulfur (Fe-S) cluster assembly. May act as a regulator of Fe-S biogenesis. The polypeptide is Iron-sulfur cluster assembly protein CyaY (Salmonella arizonae (strain ATCC BAA-731 / CDC346-86 / RSK2980)).